The primary structure comprises 213 residues: N-(5'-phosphoribosyl)anthranilate isomerase (213 aa).

It belongs to the TrpF family.

The catalysed reaction is N-(5-phospho-beta-D-ribosyl)anthranilate = 1-(2-carboxyphenylamino)-1-deoxy-D-ribulose 5-phosphate. It functions in the pathway amino-acid biosynthesis; L-tryptophan biosynthesis; L-tryptophan from chorismate: step 3/5. This chain is N-(5'-phosphoribosyl)anthranilate isomerase, found in Methanocella arvoryzae (strain DSM 22066 / NBRC 105507 / MRE50).